Here is a 460-residue protein sequence, read N- to C-terminus: Bifunctional protein GlmU (460 aa).

The segment at 1-232 (MALNVVILAA…AIEVEGANNR (232 aa)) is pyrophosphorylase. UDP-N-acetyl-alpha-D-glucosamine-binding positions include 8-11 (LAAG), K22, Q73, 78-79 (GT), 100-102 (YGD), G137, E157, N172, and N230. D102 lines the Mg(2+) pocket. N230 provides a ligand contact to Mg(2+). The linker stretch occupies residues 233–253 (VQLAQLERAYQAREAEKLMLA). An N-acetyltransferase region spans residues 254 to 460 (GANLRDPSRI…GWQRPVKIKK (207 aa)). The UDP-N-acetyl-alpha-D-glucosamine site is built by R336 and K354. The active-site Proton acceptor is H366. 2 residues coordinate UDP-N-acetyl-alpha-D-glucosamine: Y369 and N380. Acetyl-CoA is bound by residues A383, 389–390 (NY), S408, A426, and R443.

It in the N-terminal section; belongs to the N-acetylglucosamine-1-phosphate uridyltransferase family. In the C-terminal section; belongs to the transferase hexapeptide repeat family. In terms of assembly, homotrimer. Mg(2+) is required as a cofactor.

It localises to the cytoplasm. The catalysed reaction is alpha-D-glucosamine 1-phosphate + acetyl-CoA = N-acetyl-alpha-D-glucosamine 1-phosphate + CoA + H(+). It carries out the reaction N-acetyl-alpha-D-glucosamine 1-phosphate + UTP + H(+) = UDP-N-acetyl-alpha-D-glucosamine + diphosphate. The protein operates within nucleotide-sugar biosynthesis; UDP-N-acetyl-alpha-D-glucosamine biosynthesis; N-acetyl-alpha-D-glucosamine 1-phosphate from alpha-D-glucosamine 6-phosphate (route II): step 2/2. It participates in nucleotide-sugar biosynthesis; UDP-N-acetyl-alpha-D-glucosamine biosynthesis; UDP-N-acetyl-alpha-D-glucosamine from N-acetyl-alpha-D-glucosamine 1-phosphate: step 1/1. It functions in the pathway bacterial outer membrane biogenesis; LPS lipid A biosynthesis. Catalyzes the last two sequential reactions in the de novo biosynthetic pathway for UDP-N-acetylglucosamine (UDP-GlcNAc). The C-terminal domain catalyzes the transfer of acetyl group from acetyl coenzyme A to glucosamine-1-phosphate (GlcN-1-P) to produce N-acetylglucosamine-1-phosphate (GlcNAc-1-P), which is converted into UDP-GlcNAc by the transfer of uridine 5-monophosphate (from uridine 5-triphosphate), a reaction catalyzed by the N-terminal domain. In Shewanella baltica (strain OS223), this protein is Bifunctional protein GlmU.